We begin with the raw amino-acid sequence, 316 residues long: Protein lifeguard 2 (316 aa).

The interval 1–53 (MTQGKLSVANKAPGTEGQQQVHGEKKEAPAVPSAPPSYEEATSGEGMKAGAFP) is disordered. 3 helical membrane-spanning segments follow: residues 106 to 126 (VYTILLIQLLVTLAVVALFTF), 138 to 158 (PGWYWASYAVFFATYLTLACC), and 165 to 185 (FPWNLILLTVFTLSMAYLTGM). N191 carries an N-linked (GlcNAc...) asparagine glycan. The next 4 helical transmembrane spans lie at 194–214 (SVLLCLGITALVCLSVTVFSF), 225–245 (GVLFVLPMTLFFSGLILAILL), 250–270 (VPWLHAVYAALGAGVFTLFLA), and 290–310 (IFGALNIYLDIIYIFTFFLQL).

The protein belongs to the BI1 family. LFG subfamily. Interacts with FAS/TNFRSF6 and BAX.

The protein localises to the cell membrane. The protein resides in the membrane raft. Its subcellular location is the postsynaptic cell membrane. Antiapoptotic protein which protects cells uniquely from Fas-induced apoptosis. Regulates Fas-mediated apoptosis in neurons by interfering with caspase-8 activation. Plays a role in cerebellar development by affecting cerebellar size, internal granular layer (IGL) thickness, and Purkinje cell (PC) development. The polypeptide is Protein lifeguard 2 (FAIM2) (Pongo abelii (Sumatran orangutan)).